We begin with the raw amino-acid sequence, 108 residues long: Putative double-stranded DNA mimic protein PBPRA1522 (108 aa).

This sequence belongs to the putative dsDNA mimic protein family.

Its function is as follows. May act as a double-stranded DNA (dsDNA) mimic. Probably regulates the activity of a dsDNA-binding protein. This is Putative double-stranded DNA mimic protein PBPRA1522 from Photobacterium profundum (strain SS9).